The sequence spans 338 residues: Large ribosomal subunit protein uL3 (338 aa).

2 disordered regions span residues 230 to 256 and 315 to 338; these read HRKGHRRTGTIGPQAPALMFTQPRPGQ and PARPPRRAPPTTEPQVVWVSSQQP.

The protein belongs to the universal ribosomal protein uL3 family. As to quaternary structure, part of the 50S ribosomal subunit. Forms a cluster with proteins L14 and L24e.

One of the primary rRNA binding proteins, it binds directly near the 3'-end of the 23S rRNA, where it nucleates assembly of the 50S subunit. The protein is Large ribosomal subunit protein uL3 of Pyrobaculum arsenaticum (strain DSM 13514 / JCM 11321 / PZ6).